Here is an 878-residue protein sequence, read N- to C-terminus: Phosphoenolpyruvate carboxylase (878 aa).

Residues histidine 137 and lysine 545 contribute to the active site.

This sequence belongs to the PEPCase type 1 family. It depends on Mg(2+) as a cofactor.

The enzyme catalyses oxaloacetate + phosphate = phosphoenolpyruvate + hydrogencarbonate. In terms of biological role, forms oxaloacetate, a four-carbon dicarboxylic acid source for the tricarboxylic acid cycle. This chain is Phosphoenolpyruvate carboxylase, found in Proteus mirabilis (strain HI4320).